A 149-amino-acid polypeptide reads, in one-letter code: Large ribosomal subunit protein bL9 (149 aa).

This sequence belongs to the bacterial ribosomal protein bL9 family.

Binds to the 23S rRNA. The chain is Large ribosomal subunit protein bL9 from Stenotrophomonas maltophilia (strain K279a).